Consider the following 169-residue polypeptide: MPRSQRNDNFIDKTFTLVADTSLQVIPTTQGEKKAFTYYRDGMSAQSEGEYAEASQNYYEAMRLEIDPYDRSYILHNIGLIHTSNGEHARALEYYFQALERNPSLPQAFNNMAVICHYRGEQAIQQGDFETSEAWFGKAADHWKQAVLLAPGNYIEAQNWLKITGRLKD.

TPR repeat units lie at residues 35–68 (AFTY…EIDP), 72–105 (SYIL…NPSL), and 120–153 (GEQA…APGN).

The protein belongs to the Ycf3 family.

Its subcellular location is the plastid. The protein localises to the chloroplast thylakoid membrane. Functionally, essential for the assembly of the photosystem I (PSI) complex. May act as a chaperone-like factor to guide the assembly of the PSI subunits. The polypeptide is Photosystem I assembly protein Ycf3 (Huperzia lucidula (Shining clubmoss)).